The primary structure comprises 220 residues: WAP four-disulfide core domain protein 1 (220 aa).

Residues 1–31 (MPLTGVGPGSCRRQIIRALCLLLLLLHAGSA) form the signal peptide. Positions 46 to 70 (KSRAEEAGAPGGPRQPRADRCPPPP) are disordered. The WAP domain maps to 59–108 (RQPRADRCPPPPRTLPPGACQAARCQADSECPRHRRCCYNGCAYACLEAV). Cystine bridges form between cysteine 66/cysteine 96, cysteine 78/cysteine 100, cysteine 83/cysteine 95, and cysteine 89/cysteine 104. The disordered stretch occupies residues 199–220 (EYPEGDSKNVAEPGRGQQKHFQ).

The protein resides in the secreted. Has growth inhibitory activity. The polypeptide is WAP four-disulfide core domain protein 1 (WFDC1) (Homo sapiens (Human)).